The sequence spans 205 residues: Small ribosomal subunit protein uS4 (205 aa).

The tract at residues 25–48 is disordered; the sequence is KTIEARPTPPGQHGAKNTRRKKSD. An S4 RNA-binding domain is found at 94 to 157; it reads RRLDNVVFRA…TKLPIVVETL (64 aa).

This sequence belongs to the universal ribosomal protein uS4 family. Part of the 30S ribosomal subunit. Contacts protein S5. The interaction surface between S4 and S5 is involved in control of translational fidelity.

Functionally, one of the primary rRNA binding proteins, it binds directly to 16S rRNA where it nucleates assembly of the body of the 30S subunit. In terms of biological role, with S5 and S12 plays an important role in translational accuracy. This chain is Small ribosomal subunit protein uS4, found in Methylobacillus flagellatus (strain ATCC 51484 / DSM 6875 / VKM B-1610 / KT).